Consider the following 342-residue polypeptide: Transmembrane protein HWLF3 (342 aa).

The tract at residues 21–64 (PCSTSCPPSPAAPTLLRRRSLPQQRRRPSSSPNRRVRGVTTSPC) is disordered. A compositionally biased stretch (basic residues) spans 36-48 (LRRRSLPQQRRRP). A helical membrane pass occupies residues 119 to 139 (AIFIFQLAFSFGLGSVFWLGF). Asn-149 carries N-linked (GlcNAc...) asparagine; by host glycosylation. The chain crosses the membrane as a helical span at residues 150–170 (YSFFLTVLVPIVCMFITYTLG). Asn-176 carries an N-linked (GlcNAc...) asparagine; by host glycan. 5 consecutive transmembrane segments (helical) span residues 177 to 197 (ATVL…FQMC), 202 to 222 (VLVG…GLAF), 231 to 251 (WKCI…LALL), 266 to 286 (AFSI…VIFF), and 296 to 316 (AVCL…MLSG). N-linked (GlcNAc...) asparagine; by host glycosylation occurs at Asn-330.

This sequence belongs to the cytomegalovirus US12 family.

Its subcellular location is the membrane. This is Transmembrane protein HWLF3 (US20) from Homo sapiens (Human).